Reading from the N-terminus, the 119-residue chain is Large ribosomal subunit protein bL20 (119 aa).

The protein belongs to the bacterial ribosomal protein bL20 family.

Functionally, binds directly to 23S ribosomal RNA and is necessary for the in vitro assembly process of the 50S ribosomal subunit. It is not involved in the protein synthesizing functions of that subunit. The protein is Large ribosomal subunit protein bL20 of Latilactobacillus sakei subsp. sakei (strain 23K) (Lactobacillus sakei subsp. sakei).